The primary structure comprises 153 residues: Large ribosomal subunit protein uL15 (153 aa).

The segment covering 1–40 (MTDKKRRQRGSRTHGGGTHKNRRGAGNRGGRGRAGRKKHE) has biased composition (basic residues). The segment at 1 to 60 (MTDKKRRQRGSRTHGGGTHKNRRGAGNRGGRGRAGRKKHEQHNYEDVGKSGFKRPEKTDR) is disordered. Over residues 41-60 (QHNYEDVGKSGFKRPEKTDR) the composition is skewed to basic and acidic residues.

Belongs to the universal ribosomal protein uL15 family. Part of the 50S ribosomal subunit.

Its function is as follows. Binds to the 23S rRNA. The protein is Large ribosomal subunit protein uL15 of Halobacterium salinarum (strain ATCC 29341 / DSM 671 / R1).